The sequence spans 505 residues: ATP nucleosidase Cap17 (505 aa).

The segment at 1–229 is cyclic oligonucleotide sensing-domain; it reads MTNTNNEYVL…RLSEIAVELL (229 aa). The tract at residues 239-505 is purine nucleoside phosphorylase domain; that stretch reads LHTPSVLILT…DYLQHGWIRA (267 aa).

This sequence belongs to the Cap17 family.

The enzyme catalyses ATP + H2O = D-ribose 5-triphosphate + adenine. It catalyses the reaction dATP + H2O = 2-deoxyribose 5-triphosphate + adenine. Its function is as follows. Effector protein with (d)ATP degrading activity of a CBASS antivirus system. CBASS (cyclic oligonucleotide-based antiphage signaling system) provides immunity against bacteriophage. A CD-NTase protein synthesizes cyclic nucleotides in response to infection; these serve as specific second messenger signals. The signals activate a diverse range of effectors, leading to bacterial cell death and thus abortive phage infection. A type III CBASS system. Expression of this CBASS system (Cap18-Cap6-Cap7-CdnC-CapW-Cap17) in a susceptible E.coli (strain MG1655) confers resistance to bacteriophage P1, leading to cell lysis. By 50 minutes post-infection, ATP levels are markedly reduced while dATP has been eliminated. The C-terminal purine nucleoside phosphorylase (PNP) domain cleaves the N-glycosidic bond of (d)ATP to release adenine and a sugar triphosphate; has no activity on other (d)NTPs, nor on DNA or RNA. In vivo during phage infection has pleoitropic effects on nucleotide accumulation. This protein may be activated by the cognate CD-NTase (CdnC). This chain is ATP nucleosidase Cap17, found in Escherichia coli (strain KTE188).